Reading from the N-terminus, the 385-residue chain is Serine/threonine-protein kinase H2 (385 aa).

A Protein kinase domain is found at 63–320 (YDIKALIGTG…AGQALDHPWV (258 aa)). Residues 69–77 (IGTGSFSRV) and Lys92 each bind ATP. The tract at residues 342-367 (QRASPHSQSPGSAQSSKSHYSHKSRH) is disordered. Residues 344–359 (ASPHSQSPGSAQSSKS) show a composition bias toward low complexity.

It belongs to the protein kinase superfamily. CAMK Ser/Thr protein kinase family.

It catalyses the reaction L-seryl-[protein] + ATP = O-phospho-L-seryl-[protein] + ADP + H(+). It carries out the reaction L-threonyl-[protein] + ATP = O-phospho-L-threonyl-[protein] + ADP + H(+). The sequence is that of Serine/threonine-protein kinase H2 (PSKH2) from Homo sapiens (Human).